A 94-amino-acid polypeptide reads, in one-letter code: Putative pterin-4-alpha-carbinolamine dehydratase (94 aa).

Belongs to the pterin-4-alpha-carbinolamine dehydratase family.

It carries out the reaction (4aS,6R)-4a-hydroxy-L-erythro-5,6,7,8-tetrahydrobiopterin = (6R)-L-erythro-6,7-dihydrobiopterin + H2O. This is Putative pterin-4-alpha-carbinolamine dehydratase from Mycobacterium sp. (strain KMS).